The primary structure comprises 348 residues: Uroporphyrinogen decarboxylase (348 aa).

Substrate-binding positions include 28–32 (RQAGR), D78, Y154, T209, and H325.

The protein belongs to the uroporphyrinogen decarboxylase family. As to quaternary structure, homodimer.

Its subcellular location is the cytoplasm. The enzyme catalyses uroporphyrinogen III + 4 H(+) = coproporphyrinogen III + 4 CO2. It functions in the pathway porphyrin-containing compound metabolism; protoporphyrin-IX biosynthesis; coproporphyrinogen-III from 5-aminolevulinate: step 4/4. In terms of biological role, catalyzes the decarboxylation of four acetate groups of uroporphyrinogen-III to yield coproporphyrinogen-III. This chain is Uroporphyrinogen decarboxylase, found in Rhodopseudomonas palustris (strain HaA2).